We begin with the raw amino-acid sequence, 404 residues long: Coenzyme F420H(2) oxidase (404 aa).

Fe cation-binding residues include His84, Glu86, Asp88, His89, His152, Asp170, and His233. A Flavodoxin-like domain is found at 259 to 399 (VTVIYDTMHH…ACFEAGRRLA (141 aa)). Residues 265-270 (TMHHST), 317-320 (AIYD), and 351-356 (SMGGRG) each bind FMN.

This sequence in the N-terminal section; belongs to the zinc metallo-hydrolase group 3 family. The cofactor is FMN. It depends on Fe cation as a cofactor.

The enzyme catalyses 2 reduced coenzyme F420-(gamma-L-Glu)(n) + O2 = 2 oxidized coenzyme F420-(gamma-L-Glu)(n) + 2 H2O + 2 H(+). Its function is as follows. Catalyzes the oxidation of F420H(2) with O(2). May be involved in O(2) detoxification, reducing the intracellular O(2) concentration to a level allowing growth at the expense of methane formation. The protein is Coenzyme F420H(2) oxidase of Methanothermobacter thermautotrophicus (strain ATCC 29096 / DSM 1053 / JCM 10044 / NBRC 100330 / Delta H) (Methanobacterium thermoautotrophicum).